The following is a 114-amino-acid chain: UPF0342 protein PEPE_0673 (114 aa).

Belongs to the UPF0342 family.

In Pediococcus pentosaceus (strain ATCC 25745 / CCUG 21536 / LMG 10740 / 183-1w), this protein is UPF0342 protein PEPE_0673.